Consider the following 207-residue polypeptide: GTP-binding protein Rheb homolog 1 (207 aa).

Residues glycine 25, lysine 26, serine 27, tyrosine 42, threonine 45, asparagine 126, aspartate 129, and alanine 157 each coordinate GTP. Residue serine 27 coordinates Mg(2+). The Effector region signature appears at 42-50 (YESTIEDQH). Position 45 (threonine 45) interacts with Mg(2+). A compositionally biased stretch (polar residues) spans 180 to 193 (NLSPTERPNGNSPK). The interval 180–207 (NLSPTERPNGNSPKRNPFKDDGKPCSIS) is disordered. A compositionally biased stretch (basic and acidic residues) spans 196-207 (PFKDDGKPCSIS). Cysteine 204 bears the Cysteine methyl ester mark. Cysteine 204 carries the S-farnesyl cysteine lipid modification. A propeptide spans 205–207 (SIS) (removed in mature form).

The protein belongs to the small GTPase superfamily. Rheb family.

Its subcellular location is the cell membrane. It catalyses the reaction GTP + H2O = GDP + phosphate + H(+). Its function is as follows. Binds GTP and exhibits intrinsic GTPase activity. This is GTP-binding protein Rheb homolog 1 (rheb-1) from Caenorhabditis elegans.